The sequence spans 213 residues: Receptor-binding cancer antigen expressed on SiSo cells (213 aa).

The Extracellular segment spans residues 1 to 7; sequence MAITQFR. Residues 8-27 form a helical; Signal-anchor for type III membrane protein membrane-spanning segment; it reads LFKVCTCLATVFSFLKRLIC. Over 28–213 the chain is Cytoplasmic; the sequence is RSGRGRKLSG…EQNKIGVKLS (186 aa). Serine 36 is subject to Phosphoserine. Threonine 41 bears the Phosphothreonine mark. The residue at position 94 (tyrosine 94) is a Phosphotyrosine. A coiled-coil region spans residues 163–211; that stretch reads EDAAWQAEEVLRQQKIADREKRAAEQQRKKMEKEAQRLMKKEQNKIGVK. The span at 179–206 shows a compositional bias: basic and acidic residues; that stretch reads ADREKRAAEQQRKKMEKEAQRLMKKEQN. Residues 179 to 213 are disordered; sequence ADREKRAAEQQRKKMEKEAQRLMKKEQNKIGVKLS.

As to quaternary structure, homodimer. In terms of tissue distribution, widely expressed. Expressed in heart, brain, spleen, liver, kidney and testis.

The protein localises to the golgi apparatus membrane. Functionally, may participate in suppression of cell proliferation and induces apoptotic cell death through activation of interleukin-1-beta converting enzyme (ICE)-like proteases. This Mus musculus (Mouse) protein is Receptor-binding cancer antigen expressed on SiSo cells (Ebag9).